We begin with the raw amino-acid sequence, 65 residues long: Sodium channel alpha-toxin Acra4 (65 aa).

The LCN-type CS-alpha/beta domain maps to 2–63 (RDGYIVDDKN…PIKDPSYKCH (62 aa)). Intrachain disulfides connect cysteine 12/cysteine 62, cysteine 16/cysteine 34, cysteine 20/cysteine 44, and cysteine 24/cysteine 46. Position 65 (arginine 65) is a propeptide, removed by a carboxypeptidase.

It belongs to the long (4 C-C) scorpion toxin superfamily. Sodium channel inhibitor family. Alpha subfamily. Expressed by the venom gland.

It is found in the secreted. Its function is as follows. Alpha toxins bind voltage-independently at site-3 of sodium channels (Nav) and inhibit the inactivation of the activated channels, thereby blocking neuronal transmission. Electrophysiological studies of this were performed using sodium-channels expressed in F11 cell culture, by patch-clamp recordings. Affinity of this toxin toward sodium channels in F11 cell line is in the order of 1 uM concentration. This is Sodium channel alpha-toxin Acra4 from Androctonus crassicauda (Arabian fat-tailed scorpion).